Here is a 95-residue protein sequence, read N- to C-terminus: Integration host factor subunit beta (95 aa).

The segment at 59 to 95 is disordered; sequence RVGRNPKTGQSVRLDGKFVPHFKPGKELRDRVNEDES. Basic and acidic residues predominate over residues 72-95; it reads LDGKFVPHFKPGKELRDRVNEDES.

This sequence belongs to the bacterial histone-like protein family. In terms of assembly, heterodimer of an alpha and a beta chain.

Functionally, this protein is one of the two subunits of integration host factor, a specific DNA-binding protein that functions in genetic recombination as well as in transcriptional and translational control. The sequence is that of Integration host factor subunit beta from Ectopseudomonas mendocina (strain ymp) (Pseudomonas mendocina).